Here is a 209-residue protein sequence, read N- to C-terminus: Ribosomal RNA large subunit methyltransferase E (209 aa).

S-adenosyl-L-methionine is bound by residues Gly63, Trp65, Asp83, Asp99, and Asp124. Lys164 (proton acceptor) is an active-site residue.

Belongs to the class I-like SAM-binding methyltransferase superfamily. RNA methyltransferase RlmE family.

It is found in the cytoplasm. The catalysed reaction is uridine(2552) in 23S rRNA + S-adenosyl-L-methionine = 2'-O-methyluridine(2552) in 23S rRNA + S-adenosyl-L-homocysteine + H(+). Its function is as follows. Specifically methylates the uridine in position 2552 of 23S rRNA at the 2'-O position of the ribose in the fully assembled 50S ribosomal subunit. This Cronobacter sakazakii (strain ATCC BAA-894) (Enterobacter sakazakii) protein is Ribosomal RNA large subunit methyltransferase E.